Consider the following 279-residue polypeptide: 3-methyl-2-oxobutanoate hydroxymethyltransferase (279 aa).

Mg(2+) is bound by residues D43 and D82. 3-methyl-2-oxobutanoate-binding positions include 43 to 44 (DS), D82, and K112. E114 contributes to the Mg(2+) binding site. E181 serves as the catalytic Proton acceptor.

Belongs to the PanB family. As to quaternary structure, homodecamer; pentamer of dimers. It depends on Mg(2+) as a cofactor.

It localises to the cytoplasm. It catalyses the reaction 3-methyl-2-oxobutanoate + (6R)-5,10-methylene-5,6,7,8-tetrahydrofolate + H2O = 2-dehydropantoate + (6S)-5,6,7,8-tetrahydrofolate. It functions in the pathway cofactor biosynthesis; (R)-pantothenate biosynthesis; (R)-pantoate from 3-methyl-2-oxobutanoate: step 1/2. Its function is as follows. Catalyzes the reversible reaction in which hydroxymethyl group from 5,10-methylenetetrahydrofolate is transferred onto alpha-ketoisovalerate to form ketopantoate. This chain is 3-methyl-2-oxobutanoate hydroxymethyltransferase, found in Exiguobacterium sibiricum (strain DSM 17290 / CCUG 55495 / CIP 109462 / JCM 13490 / 255-15).